Reading from the N-terminus, the 750-residue chain is Polyribonucleotide nucleotidyltransferase (750 aa).

Mg(2+)-binding residues include Asp-523 and Asp-529. The 60-residue stretch at 589–648 (PRVTSISIPVDKIGEVIGPKGKMINSITEETGAEITIEDDGTIYVGAADGPSAEAAIDKI) folds into the KH domain. In terms of domain architecture, S1 motif spans 660–729 (GERFLGTVVK…SRGKISLVVV (70 aa)).

Belongs to the polyribonucleotide nucleotidyltransferase family. It depends on Mg(2+) as a cofactor.

It localises to the cytoplasm. The catalysed reaction is RNA(n+1) + phosphate = RNA(n) + a ribonucleoside 5'-diphosphate. Functionally, involved in mRNA degradation. Catalyzes the phosphorolysis of single-stranded polyribonucleotides processively in the 3'- to 5'-direction. This chain is Polyribonucleotide nucleotidyltransferase, found in Saccharopolyspora erythraea (strain ATCC 11635 / DSM 40517 / JCM 4748 / NBRC 13426 / NCIMB 8594 / NRRL 2338).